Reading from the N-terminus, the 246-residue chain is 1-(5-phosphoribosyl)-5-[(5-phosphoribosylamino)methylideneamino] imidazole-4-carboxamide isomerase (246 aa).

Residue Asp-7 is the Proton acceptor of the active site. Catalysis depends on Asp-130, which acts as the Proton donor.

The protein belongs to the HisA/HisF family.

The protein localises to the cytoplasm. The catalysed reaction is 1-(5-phospho-beta-D-ribosyl)-5-[(5-phospho-beta-D-ribosylamino)methylideneamino]imidazole-4-carboxamide = 5-[(5-phospho-1-deoxy-D-ribulos-1-ylimino)methylamino]-1-(5-phospho-beta-D-ribosyl)imidazole-4-carboxamide. The protein operates within amino-acid biosynthesis; L-histidine biosynthesis; L-histidine from 5-phospho-alpha-D-ribose 1-diphosphate: step 4/9. This Sodalis glossinidius (strain morsitans) protein is 1-(5-phosphoribosyl)-5-[(5-phosphoribosylamino)methylideneamino] imidazole-4-carboxamide isomerase.